Reading from the N-terminus, the 347-residue chain is NHL repeat-containing protein 3 (347 aa).

A signal peptide spans 1–22 (MARAWVCLAGAAFFLSCLVLHS). An NHL 1 repeat occupies 47–93 (RLDLGWPKNSEYFTGATFCVAVDSLNGLVYVAQRGDNIPKVLVFSED). N-linked (GlcNAc...) asparagine glycosylation occurs at Asn-101. NHL repeat units lie at residues 150-196 (TPGK…LSQD) and 200-243 (LWLR…FDKD). Asn-206 and Asn-278 each carry an N-linked (GlcNAc...) asparagine glycan. The NHL 4 repeat unit spans residues 294–338 (GDCSVVSTIQLADQVLPHLLEVDRKTGAVYVAEIGAKQIQKYIPW).

The sequence is that of NHL repeat-containing protein 3 (Nhlrc3) from Mus musculus (Mouse).